A 238-amino-acid polypeptide reads, in one-letter code: Small ribosomal subunit protein uS2 (238 aa).

It belongs to the universal ribosomal protein uS2 family.

The protein is Small ribosomal subunit protein uS2 of Haemophilus ducreyi (strain 35000HP / ATCC 700724).